A 509-amino-acid chain; its full sequence is Maturase K (509 aa).

The protein belongs to the intron maturase 2 family. MatK subfamily.

The protein resides in the plastid. Its subcellular location is the chloroplast. Its function is as follows. Usually encoded in the trnK tRNA gene intron. Probably assists in splicing its own and other chloroplast group II introns. This is Maturase K from Nymphaea odorata (White water lily).